A 115-amino-acid polypeptide reads, in one-letter code: Large ribosomal subunit protein bL19 (115 aa).

It belongs to the bacterial ribosomal protein bL19 family.

This protein is located at the 30S-50S ribosomal subunit interface and may play a role in the structure and function of the aminoacyl-tRNA binding site. In Streptococcus equi subsp. equi (strain 4047), this protein is Large ribosomal subunit protein bL19.